The primary structure comprises 735 residues: Receptor-type guanylate cyclase gcy-27 (735 aa).

Residue Asn11 is glycosylated (N-linked (GlcNAc...) asparagine). A helical transmembrane segment spans residues 28-48; that stretch reads FIICTLPVPIYFVVVAIWTIN. Residues 188–465 enclose the Protein kinase domain; sequence ALTSRRRVFG…IENLRNAIAI (278 aa). In terms of domain architecture, Guanylate cyclase spans 538 to 668; that stretch reads TVMFVQICDF…DTVNFASRMQ (131 aa).

The protein belongs to the adenylyl cyclase class-4/guanylyl cyclase family. As to expression, expressed bilaterally in ASK, ASI and ASJ sensory neurons.

Its subcellular location is the cell membrane. The catalysed reaction is GTP = 3',5'-cyclic GMP + diphosphate. Functionally, guanylate cyclase involved in the production of the second messenger cGMP. May be involved in sensitivity to quinine by regulating egl-4 activity through the production of cGMP. Promotes the calcium flux to the cytoplasm in ASJ sensory neurons upon removal of a nitric oxide (NO) stimulus and is thereby involved in the behavioral avoidance response to NO-producing organisms like P.aeruginosa. The polypeptide is Receptor-type guanylate cyclase gcy-27 (Caenorhabditis elegans).